The following is a 473-amino-acid chain: T-box transcription factor TBX6L (473 aa).

A DNA-binding region (T-box) is located at residues 43–217; the sequence is LWDKFSSIGT…NNPFAKGFRD (175 aa). Positions 342–361 are disordered; sequence RLNPQETHHNSRPKIQLQPP.

Exclusively expressed by ventral mesendoderm.

It localises to the nucleus. In terms of biological role, probable transcriptional regulator involved in developmental processes. The protein is T-box transcription factor TBX6L (tbx6l) of Danio rerio (Zebrafish).